The following is a 389-amino-acid chain: MKSAALLLPLYTAAFAAAAFHHEHAQAVIQDQQLTIVEPDEYLIELSPGETRWVNENEKWELRKKNINFFDITHNAELGTLNHRINAESVKYPSKPVFNETLAPLLKELDKNNMRAHLETFTSFHTRYYKSQYGVQSSAWLLGQVNKTLADAGAINASVKAFPHPWGQSSIIATIPGKSDKTIVIGAHQDSINLFFPAFLAAPGADDDGSGTVTILEALRVLLKSDEILKGEAENTIEFHWYSAEEGGLLGSQAIFQSYEKEARDVKAMLQQDMTGYVQKTLDAGEPESVGVITDFVDPGLTEFIKKIITVYCDIPYVLTKCGYACSDHASASKAGYPSAFVIESDFKYSDKKIHTTEDKIEYLSFDHMLQHARMTLALAYELAFAEFK.

Residues 1–18 (MKSAALLLPLYTAAFAAA) form the signal peptide. The propeptide occupies 19-89 (AFHHEHAQAV…TLNHRINAES (71 aa)). 3 N-linked (GlcNAc...) asparagine glycosylation sites follow: Asn99, Asn146, and Asn156. 4 residues coordinate Zn(2+): His188, Asp207, Glu246, and Asp273. Cys322 and Cys326 are oxidised to a cystine. Residue His355 coordinates Zn(2+).

The protein belongs to the peptidase M28 family. M28E subfamily. Monomer. Zn(2+) is required as a cofactor.

It is found in the secreted. Functionally, extracellular aminopeptidase that allows assimilation of proteinaceous substrates. This is Leucine aminopeptidase 1 (lap1) from Pyrenophora tritici-repentis (strain Pt-1C-BFP) (Wheat tan spot fungus).